We begin with the raw amino-acid sequence, 318 residues long: Taste receptor type 2 member 60 (318 aa).

Residues 1-7 are Extracellular-facing; the sequence is MNGDHMV. The helical transmembrane segment at 8-28 threads the bilayer; the sequence is LGSSVTDKKAIILVTILLLLR. Over 29 to 40 the chain is Cytoplasmic; it reads LVAIAGNGFITA. Residues 41-61 form a helical membrane-spanning segment; sequence ALGVEWVLRRMLLPCDKLLVS. Topologically, residues 62-88 are extracellular; sequence LGASHFCLQSVVMGKTIYVFLYPMAFP. A helical membrane pass occupies residues 89-109; the sequence is YNPVLQFLAFQWDFLNAATLW. At 110–128 the chain is on the cytoplasmic side; it reads FSTWLSVFYCVKIATFTHP. The helical transmembrane segment at 129–149 threads the bilayer; the sequence is VFFWLKHKLSGWLPWMIFSYV. At 150–183 the chain is on the extracellular side; that stretch reads GLSSFTTILFFIGNHRMYQNYLKNHLQPWNVTGN. N-linked (GlcNAc...) asparagine glycosylation is present at Asn-179. A helical membrane pass occupies residues 184-204; sequence SIRSYCEKFYLFPLKMITWTM. Over 205–234 the chain is Cytoplasmic; that stretch reads PTAVFFICMILLITSLGRHMKKALLTTSGF. Residues 235 to 255 traverse the membrane as a helical segment; sequence REPSVQAHIKALLALLSFAML. At 256–264 the chain is on the extracellular side; it reads FISYFLSLV. Residues 265-285 form a helical membrane-spanning segment; that stretch reads FSAAGIFPPLDFKFWVWESVI. Over 286–318 the chain is Cytoplasmic; that stretch reads YLCAAVHPIILLFSNCRLRAVLKSRRSSRCGTP.

The protein belongs to the G-protein coupled receptor T2R family.

It localises to the membrane. Receptor that may play a role in the perception of bitterness and is gustducin-linked. May play a role in sensing the chemical composition of the gastrointestinal content. The activity of this receptor may stimulate alpha gustducin, mediate PLC-beta-2 activation and lead to the gating of TRPM5. The chain is Taste receptor type 2 member 60 (TAS2R60) from Pan paniscus (Pygmy chimpanzee).